The chain runs to 337 residues: Manganese-dependent ADP-ribose/CDP-alcohol diphosphatase (337 aa).

At Met1 the chain carries N-acetylmethionine. The Zn(2+) site is built by Asp25, Gln27, Asp74, Asn110, His241, His278, and His280.

The protein belongs to the ADPRibase-Mn family. In terms of assembly, monomer. Mg(2+) serves as cofactor.

It carries out the reaction CDP-choline + H2O = phosphocholine + CMP + 2 H(+). The catalysed reaction is ADP-D-ribose + H2O = D-ribose 5-phosphate + AMP + 2 H(+). The enzyme catalyses CDP-glycerol + H2O = sn-glycerol 3-phosphate + CMP + 2 H(+). In terms of biological role, hydrolyzes ADP-ribose, IDP-ribose, CDP-glycerol, CDP-choline and CDP-ethanolamine, but not other non-reducing ADP-sugars or CDP-glucose. May be involved in immune cell signaling as suggested by the second-messenger role of ADP-ribose, which activates TRPM2 as a mediator of oxidative/nitrosative stress. The sequence is that of Manganese-dependent ADP-ribose/CDP-alcohol diphosphatase (ADPRM) from Bos taurus (Bovine).